Reading from the N-terminus, the 450-residue chain is tRNA-2-methylthio-N(6)-dimethylallyladenosine synthase (450 aa).

The 115-residue stretch at Lys17 to Ala131 folds into the MTTase N-terminal domain. Residues Cys26, Cys62, Cys94, Cys168, Cys172, and Cys175 each contribute to the [4Fe-4S] cluster site. Residues Arg154 to Lys385 form the Radical SAM core domain. The region spanning Gln388 to Gln450 is the TRAM domain.

This sequence belongs to the methylthiotransferase family. MiaB subfamily. In terms of assembly, monomer. [4Fe-4S] cluster is required as a cofactor.

It is found in the cytoplasm. The catalysed reaction is N(6)-dimethylallyladenosine(37) in tRNA + (sulfur carrier)-SH + AH2 + 2 S-adenosyl-L-methionine = 2-methylsulfanyl-N(6)-dimethylallyladenosine(37) in tRNA + (sulfur carrier)-H + 5'-deoxyadenosine + L-methionine + A + S-adenosyl-L-homocysteine + 2 H(+). Its function is as follows. Catalyzes the methylthiolation of N6-(dimethylallyl)adenosine (i(6)A), leading to the formation of 2-methylthio-N6-(dimethylallyl)adenosine (ms(2)i(6)A) at position 37 in tRNAs that read codons beginning with uridine. The protein is tRNA-2-methylthio-N(6)-dimethylallyladenosine synthase of Protochlamydia amoebophila (strain UWE25).